The primary structure comprises 356 residues: Serine/arginine-rich splicing factor RS41 (356 aa).

2 RRM domains span residues 2-74 (KPVF…WTKN) and 96-167 (KTLF…YAVK). Residues 73-92 (KNDRGGAGRSGGSRRSSSGL) form a disordered region. Positions 168 to 186 (DDDSRGNGYSPERRRDRSP) are enriched in basic and acidic residues. Residues 168-356 (DDDSRGNGYS…SPSRSPPAEE (189 aa)) are disordered. 6 positions are modified to phosphoserine: serine 192, serine 194, serine 210, serine 239, serine 254, and serine 274. Basic and acidic residues predominate over residues 238-253 (LSPDYKRDDRRRERVA). Repeat copies occupy residues 267–278 (KGRGESRSPPPY), 279–290 (EKRRESRSPPPY), and 291–302 (EKRRESRSPPPY). Residues 267–307 (KGRGESRSPPPYEKRRESRSPPPYEKRRESRSPPPYEKRRE) are 4 X 12 AA tandem repeats of [KE]-[GK]-R -[GR]-E-S-R-S-P-P-P-Y. Positions 268–306 (GRGESRSPPPYEKRRESRSPPPYEKRRESRSPPPYEKRR) are enriched in basic and acidic residues. The 4; truncated repeat unit spans residues 303–307 (EKRRE). A phosphoserine mark is found at serine 309, serine 324, serine 342, serine 347, and serine 351.

This sequence belongs to the splicing factor SR family. RS subfamily. Component of the spliceosome. Interacts with RCF3 and CPL1. Interacts with DRB1/HYL1 and SE. In terms of tissue distribution, leaves, stem, roots and flowers.

It is found in the nucleus. Its subcellular location is the nucleus speckle. Functionally, required for constitutive and alternative pre-mRNA splicing. Involved in primary miRNA processing and pri-miRNA biogenesis. Binds both intronless and intron-containing pri-miRNAs. This Arabidopsis thaliana (Mouse-ear cress) protein is Serine/arginine-rich splicing factor RS41 (RS41).